Reading from the N-terminus, the 195-residue chain is MKIGVLALQGAVSEHIRLLTNSGAEAIEIKRADQLAEVDGLILPGGESTAMRRLIDKYQLFKPLREFGESGKPILGTCAGLILMAKTLSGEQDGHLGFIDMVVERNAFGRQRDSFEATLDVKGVAEKLTAVFIRAPLVKEVGPDVDILSEYNGEIVAVKQGSFLACSFHPELTDDARLHQAFIKMVAERSVLEAH.

L-glutamine is bound at residue 46–48; it reads GES. Catalysis depends on Cys-78, which acts as the Nucleophile. Residues Arg-105 and 133 to 134 each bind L-glutamine; that span reads IR. Active-site charge relay system residues include His-169 and Glu-171.

It belongs to the glutaminase PdxT/SNO family. As to quaternary structure, in the presence of PdxS, forms a dodecamer of heterodimers. Only shows activity in the heterodimer.

It catalyses the reaction aldehydo-D-ribose 5-phosphate + D-glyceraldehyde 3-phosphate + L-glutamine = pyridoxal 5'-phosphate + L-glutamate + phosphate + 3 H2O + H(+). The enzyme catalyses L-glutamine + H2O = L-glutamate + NH4(+). Its pathway is cofactor biosynthesis; pyridoxal 5'-phosphate biosynthesis. Its function is as follows. Catalyzes the hydrolysis of glutamine to glutamate and ammonia as part of the biosynthesis of pyridoxal 5'-phosphate. The resulting ammonia molecule is channeled to the active site of PdxS. The polypeptide is Pyridoxal 5'-phosphate synthase subunit PdxT (Shouchella clausii (strain KSM-K16) (Alkalihalobacillus clausii)).